A 306-amino-acid chain; its full sequence is F-box/LRR-repeat protein At3g26922 (306 aa).

Residues 13–73 form the F-box domain; sequence EDRISDLPEA…QSEDETYSEI (61 aa). LRR repeat units lie at residues 67–93, 98–122, 138–170, 171–196, 215–243, and 263–288; these read DETY…HLGF, CRSV…VLHV, CETL…RLEN, VDYK…VVYR, LTIY…KIDG, and IMNV…SLAL.

This Arabidopsis thaliana (Mouse-ear cress) protein is F-box/LRR-repeat protein At3g26922.